Consider the following 164-residue polypeptide: Probable metalloprotease y4qB (164 aa).

An MPN domain is found at 5-142 (IWIPESVVEA…WLPHAWIGQL (138 aa)). Residues histidine 89, histidine 91, and aspartate 103 each contribute to the Zn(2+) site.

This sequence belongs to the peptidase M67B family.

The polypeptide is Probable metalloprotease y4qB (Sinorhizobium fredii (strain NBRC 101917 / NGR234)).